A 214-amino-acid polypeptide reads, in one-letter code: Large ribosomal subunit protein uL4c (214 aa).

Residues 43 to 80 (KQSNEKRQGSANTKTRSEVRGGGRKPWRQKGTGRARAG) form a disordered region. The span at 64–75 (GGRKPWRQKGTG) shows a compositional bias: basic residues.

The protein belongs to the universal ribosomal protein uL4 family. In terms of assembly, part of the 50S ribosomal subunit.

It is found in the plastid. Its subcellular location is the chloroplast. Probably binds the 23S rRNA. The sequence is that of Large ribosomal subunit protein uL4c (rpl4) from Porphyra purpurea (Red seaweed).